We begin with the raw amino-acid sequence, 313 residues long: MDSLNQTRVTEFVFLGLTDNRVLEMLFFMAFSAIYMLTLSGNILIIIATVFTPSLHTPMYFFLSNLSFIDICHSSVTVPKMLEGLLLERKTISFDNCITQLFFLHLFACAEIFLLIIVAYDRYVAICTPLHYPNVMNMRVCIQLVFALWLGGTVHSLGQTFLTIRLPYCGPNIIDSYFCDVPLVIKLACTDTYLTGILIVTNSGTISLSCFLAVVTSYMVILVSLRKHSAEGRQKALSTCSAHFMVVALFFGPCIFIYTRPDTSFSIDKVVSVFYTVVTPLLNPFIYTLRNEEVKSAMKQLRQRQVFFTKSYT.

At 1 to 25 (MDSLNQTRVTEFVFLGLTDNRVLEM) the chain is on the extracellular side. Residue Asn5 is glycosylated (N-linked (GlcNAc...) asparagine). The helical transmembrane segment at 26–49 (LFFMAFSAIYMLTLSGNILIIIAT) threads the bilayer. At 50–57 (VFTPSLHT) the chain is on the cytoplasmic side. Residues 58 to 79 (PMYFFLSNLSFIDICHSSVTVP) traverse the membrane as a helical segment. Topologically, residues 80-100 (KMLEGLLLERKTISFDNCITQ) are extracellular. A disulfide bond links Cys97 and Cys179. The chain crosses the membrane as a helical span at residues 101–120 (LFFLHLFACAEIFLLIIVAY). Residues His105 and Cys109 each contribute to the Cu cation site. Topologically, residues 121 to 139 (DRYVAICTPLHYPNVMNMR) are cytoplasmic. The chain crosses the membrane as a helical span at residues 140–158 (VCIQLVFALWLGGTVHSLG). Over 159 to 195 (QTFLTIRLPYCGPNIIDSYFCDVPLVIKLACTDTYLT) the chain is Extracellular. Residues 196–219 (GILIVTNSGTISLSCFLAVVTSYM) form a helical membrane-spanning segment. Residues 220-235 (VILVSLRKHSAEGRQK) are Cytoplasmic-facing. The helical transmembrane segment at 236–258 (ALSTCSAHFMVVALFFGPCIFIY) threads the bilayer. Over 259–269 (TRPDTSFSIDK) the chain is Extracellular. Residue Arg260 coordinates Cu cation. The chain crosses the membrane as a helical span at residues 270–289 (VVSVFYTVVTPLLNPFIYTL). The Cytoplasmic segment spans residues 290–313 (RNEEVKSAMKQLRQRQVFFTKSYT).

Belongs to the G-protein coupled receptor 1 family.

It is found in the cell membrane. With respect to regulation, copper binding enhances receptor activity in response to odorant binding. Its function is as follows. Olfactory receptor that is activated by the binding of organosulfur odorants with thioether groups such as (methylthio)methanethiol (MTMT) and bis(methylthiomethyl) disulfide. Also binds odorants cis-cyclooctene and tert-butyl mercaptan. The activity of this receptor is mediated by G proteins which activate adenylyl cyclase. The polypeptide is Olfactory receptor 4E2 (Homo sapiens (Human)).